Consider the following 280-residue polypeptide: P32 adhesin (280 aa).

2 helical membrane passes run 13–37 and 68–92; these read FIVL…ALVV and WFIP…AIGL. The span at 114 to 128 shows a compositional bias: polar residues; the sequence is EQLQRISDQQEQQTV. Disordered regions lie at residues 114–149 and 163–280; these read EQLQ…QPLQ and FNPN…GLKP. Low complexity-rich tracts occupy residues 132 to 149 and 168 to 188; these read PQQS…QPLQ and QQRP…NFNP. Tandem repeats lie at residues 163–168, 170–174, 186–190, 191–195, 196–200, 199–204, 206–210, 222–226, 227–231, 232–236, 249–254, 256–260, and 259–264. The segment at 163–264 is 6 X 5 AA repeats of [FM]-N-P-N-M-Q; that stretch reads FNPNMQQRPG…QRPGFNPNMQ (102 aa). Residues 170-260 are 5 X 5 AA repeats of R-P-G-F-N; it reads RPGFNQPNQQ…PNMQQRPGFN (91 aa). The segment at 186-226 is 2 X 5 AA repeats of F-N-P-R-M; the sequence is FNPRMNPNMQRPGFNPNMQQRPGFNQPNQQFQPHNNFNPRM. Residues 204-224 show a composition bias toward low complexity; it reads QQRPGFNQPNQQFQPHNNFNP. Low complexity predominate over residues 235–257; sequence FNQPHPNQFAQPNNFNPNMQQRP. Over residues 261 to 271 the composition is skewed to polar residues; that stretch reads PNMQQRPNPSQ.

Its subcellular location is the cell projection. The protein localises to the attachment organelle membrane. Adhesin necessary for successful cytadherence and virulence. This is P32 adhesin from Mycoplasma genitalium (strain ATCC 33530 / DSM 19775 / NCTC 10195 / G37) (Mycoplasmoides genitalium).